Here is a 315-residue protein sequence, read N- to C-terminus: Borealin (315 aa).

2 disordered regions span residues 103–126 and 138–226; these read IEGH…GASG and LRST…TPPM. Thr146 carries the phosphothreonine modification. A Phosphoserine modification is found at Ser152. Residues 153–162 show a composition bias toward basic residues; sequence ARARRARRSR. At Ser163 the chain carries Phosphoserine. The span at 178-188 shows a compositional bias: low complexity; the sequence is SISSSSSSSRN. Ser205 is modified (phosphoserine). Thr209 carries the phosphothreonine modification. Residues Ser218, Ser220, and Ser244 each carry the phosphoserine modification.

This sequence belongs to the borealin family. Component of the CPC complex. Ubiquitously expressed in the early embryo. Expression is restricted to the ventral nerve cord and brain during later embryonic stages.

Its subcellular location is the nucleus. The protein resides in the chromosome. It is found in the centromere. It localises to the cytoplasm. The protein localises to the cytoskeleton. Its subcellular location is the spindle. Functionally, component of the chromosomal passenger complex (CPC), a complex that acts as a key regulator of embryonic mitosis. The CPC complex has essential functions at the centromere for ensuring sister chromatid cohesion, recruitment of the CPC to kinetochores, and chromosome alignment and segregation. There is no function in meiotic histone phosphorylation or spindle formation. This Drosophila melanogaster (Fruit fly) protein is Borealin (borr).